The sequence spans 81 residues: Photosystem I iron-sulfur center (81 aa).

4Fe-4S ferredoxin-type domains are found at residues 2-31 (SHKI…MIPW) and 39-68 (IASA…VRVY). [4Fe-4S] cluster contacts are provided by C11, C14, C17, C21, C48, C51, C54, and C58.

The eukaryotic PSI reaction center is composed of at least 11 subunits. [4Fe-4S] cluster serves as cofactor.

The protein localises to the plastid. It is found in the chloroplast thylakoid membrane. The enzyme catalyses reduced [plastocyanin] + hnu + oxidized [2Fe-2S]-[ferredoxin] = oxidized [plastocyanin] + reduced [2Fe-2S]-[ferredoxin]. Apoprotein for the two 4Fe-4S centers FA and FB of photosystem I (PSI); essential for photochemical activity. FB is the terminal electron acceptor of PSI, donating electrons to ferredoxin. The C-terminus interacts with PsaA/B/D and helps assemble the protein into the PSI complex. Required for binding of PsaD and PsaE to PSI. PSI is a plastocyanin-ferredoxin oxidoreductase, converting photonic excitation into a charge separation, which transfers an electron from the donor P700 chlorophyll pair to the spectroscopically characterized acceptors A0, A1, FX, FA and FB in turn. This is Photosystem I iron-sulfur center from Chara vulgaris (Common stonewort).